Consider the following 496-residue polypeptide: Fibronectin type III and SPRY domain-containing protein 1 (496 aa).

A coiled-coil region spans residues 4 to 99; that stretch reads QREALRKIIT…ALESSEELLE (96 aa). The COS domain maps to 105 to 162; sequence LQAMDREDFPQAAKQIKDGVTMAPAFRLSLKAKVSDNMSHLMVDFAQERQMLQALKFL. The region spanning 164-268 is the Fibronectin type-III domain; it reads VPSAPVIDLA…EPVTLETPAF (105 aa). The region spanning 268–477 is the B30.2/SPRY domain; the sequence is FMFRLDASTS…VTTGLQVPSS (210 aa). The interval 301-336 is disordered; it reads KAREKDGKGRTASPINSPARGTPSPKRMPSGRGGRD. Omega-N-methylarginine occurs at positions 310 and 320.

As to quaternary structure, oligomerization is required for binding to microtubules.

Its subcellular location is the cytoplasm. The protein resides in the cytoskeleton. It is found in the microtubule organizing center. The protein localises to the centrosome. It localises to the nucleus. Its subcellular location is the cleavage furrow. Functionally, may be involved in microtubule organization and stabilization. The chain is Fibronectin type III and SPRY domain-containing protein 1 (FSD1) from Macaca fascicularis (Crab-eating macaque).